A 488-amino-acid chain; its full sequence is F-box protein At3g60790 (488 aa).

Residues 1–21 are disordered; the sequence is MTTQSSSSSSSLPSSLSSTPP. An F-box domain is found at 49 to 95; it reads VDRISMLPDEMLQKILSTLSTKDAVITSTLSKRWVDQWKRIPHLCVD.

This Arabidopsis thaliana (Mouse-ear cress) protein is F-box protein At3g60790.